The sequence spans 613 residues: Serine protease FAM111A (613 aa).

The disordered stretch occupies residues 1–72 (MSCKKRKSQI…TRQDQTPPLN (72 aa)). Lys19 is covalently cross-linked (Glycyl lysine isopeptide (Lys-Gly) (interchain with G-Cter in SUMO2)). At Ser25 the chain carries Phosphoserine. Residue Lys29 forms a Glycyl lysine isopeptide (Lys-Gly) (interchain with G-Cter in SUMO2) linkage. Basic and acidic residues predominate over residues 40–56 (VDSKKMPRDITNTRDQR). Lys62 is covalently cross-linked (Glycyl lysine isopeptide (Lys-Gly) (interchain with G-Cter in SUMO2)). Active-site charge relay system residues include His383, Asp437, and Ser543.

The protein belongs to the FAM111 family. In terms of assembly, interacts (via PIP-box) with PCNA; this interaction is direct. Autocatalytically cleaved; autocatalytic cleavage takes place in trans.

It is found in the nucleus. The protein resides in the chromosome. The protein localises to the cytoplasm. Its function is as follows. Single-stranded DNA-binding serine protease that mediates the proteolytic cleavage of covalent DNA-protein cross-links (DPCs) during DNA synthesis, thereby playing a key role in maintaining genomic integrity. DPCs are highly toxic DNA lesions that interfere with essential chromatin transactions, such as replication and transcription, and which are induced by reactive agents, such as UV light or formaldehyde. Protects replication fork from stalling by removing DPCs, such as covalently trapped topoisomerase 1 (TOP1) adducts on DNA lesion, or poly(ADP-ribose) polymerase 1 (PARP1)-DNA complexes trapped by PARP inhibitors. Required for PCNA loading on replication sites. Promotes S-phase entry and DNA synthesis. The chain is Serine protease FAM111A from Mus musculus (Mouse).